The chain runs to 258 residues: Indole-3-glycerol phosphate synthase (258 aa).

This sequence belongs to the TrpC family.

The enzyme catalyses 1-(2-carboxyphenylamino)-1-deoxy-D-ribulose 5-phosphate + H(+) = (1S,2R)-1-C-(indol-3-yl)glycerol 3-phosphate + CO2 + H2O. Its pathway is amino-acid biosynthesis; L-tryptophan biosynthesis; L-tryptophan from chorismate: step 4/5. The chain is Indole-3-glycerol phosphate synthase from Campylobacter jejuni (strain RM1221).